Consider the following 132-residue polypeptide: Histone H2A.Z (132 aa).

Residues 1 to 11 show a composition bias toward basic residues; that stretch reads MSGKGKVHGGK. The disordered stretch occupies residues 1–27; it reads MSGKGKVHGGKGKSSETAKSTTSHSAR. Ser2 bears the N-acetylserine mark. An N6-acetyllysine mark is found at Lys4, Lys11, and Lys13.

This sequence belongs to the histone H2A family. As to quaternary structure, the nucleosome is a histone octamer containing two molecules each of H2A, H2B, H3 and H4 assembled in one H3-H4 heterotetramer and two H2A-H2B heterodimers. The octamer wraps approximately 147 bp of DNA. H2A or its variant H2A.Z forms a heterodimer with H2B. H2A.Z associates with the VPS72/SWC2 subunit of the SWR1 chromatin remodeling complex. Also interacts with RBP1/DNA-directed RNA polymerase II largest subunit. Acetylated once deposited into chromatin.

It is found in the nucleus. The protein resides in the chromosome. Its function is as follows. Variant histone H2A which can replace H2A in some nucleosomes. Nucleosomes wrap and compact DNA into chromatin, limiting DNA accessibility to the cellular machineries which require DNA as a template. Histones thereby play a central role in transcription regulation, DNA repair, DNA replication and chromosomal stability. DNA accessibility is regulated via a complex set of post-translational modifications of histones, also called histone code, and nucleosome remodeling. This variant is enriched at promoters, it may keep them in a repressed state until the appropriate activation signal is received. Near telomeres, it may counteract gene silencing caused by the spread of heterochromatin proteins. Required for the RNA polymerase II and SPT15/TBP recruitment to the target genes. Involved in chromosome stability. The chain is Histone H2A.Z (HTZ1) from Debaryomyces hansenii (strain ATCC 36239 / CBS 767 / BCRC 21394 / JCM 1990 / NBRC 0083 / IGC 2968) (Yeast).